The sequence spans 38 residues: Photosystem II reaction center protein L (38 aa).

A helical membrane pass occupies residues 17–37; the sequence is SLFWGLLLIFVLAVLFSNYFF.

Belongs to the PsbL family. In terms of assembly, PSII is composed of 1 copy each of membrane proteins PsbA, PsbB, PsbC, PsbD, PsbE, PsbF, PsbH, PsbI, PsbJ, PsbK, PsbL, PsbM, PsbT, PsbX, PsbY, PsbZ, Psb30/Ycf12, at least 3 peripheral proteins of the oxygen-evolving complex and a large number of cofactors. It forms dimeric complexes.

Its subcellular location is the plastid. It is found in the chloroplast thylakoid membrane. In terms of biological role, one of the components of the core complex of photosystem II (PSII). PSII is a light-driven water:plastoquinone oxidoreductase that uses light energy to abstract electrons from H(2)O, generating O(2) and a proton gradient subsequently used for ATP formation. It consists of a core antenna complex that captures photons, and an electron transfer chain that converts photonic excitation into a charge separation. This subunit is found at the monomer-monomer interface and is required for correct PSII assembly and/or dimerization. This chain is Photosystem II reaction center protein L, found in Chaetosphaeridium globosum (Charophycean green alga).